We begin with the raw amino-acid sequence, 308 residues long: 2-dehydro-3-deoxy-phosphogluconate/2-dehydro-3-deoxy-6-phosphogalactonate aldolase (308 aa).

Substrate is bound by residues T57–T58, Y144–Y146, and K169–T171. K169 acts as the Schiff-base intermediate with substrate in catalysis.

This sequence belongs to the DapA family. KDPG aldolase subfamily. As to quaternary structure, homotetramer; dimer of dimers.

The catalysed reaction is 2-dehydro-3-deoxy-6-phospho-D-gluconate = D-glyceraldehyde 3-phosphate + pyruvate. It carries out the reaction 2-dehydro-3-deoxy-6-phospho-D-galactonate = D-glyceraldehyde 3-phosphate + pyruvate. It participates in carbohydrate acid metabolism; 2-dehydro-3-deoxy-D-gluconate degradation; D-glyceraldehyde 3-phosphate and pyruvate from 2-dehydro-3-deoxy-D-gluconate: step 2/2. In terms of biological role, involved in the degradation of glucose and galactose via the Entner-Doudoroff pathway. Catalyzes the reversible cleavage of 2-keto-3-deoxy-6-phosphogluconate (KDPG) and 2-keto-3-deoxygluconate (KDG) forming pyruvate and glyceraldehyde 3-phosphate or glyceraldehyde, respectively. It is also able to catalyze the reversible cleavage of 2-keto-3-deoxy-6-phosphogalactonate (KDPGal) and 2-keto-3-deoxygalactonate (KDGal). The sequence is that of 2-dehydro-3-deoxy-phosphogluconate/2-dehydro-3-deoxy-6-phosphogalactonate aldolase (eda) from Saccharolobus solfataricus (strain ATCC 35092 / DSM 1617 / JCM 11322 / P2) (Sulfolobus solfataricus).